The following is a 118-amino-acid chain: UPF0329 protein ECU03_0030/ECU05_0040/ECU06_0010/ECU06_1710/ECU11_0010 (118 aa).

This sequence belongs to the UPF0329 family.

The protein is UPF0329 protein ECU03_0030/ECU05_0040/ECU06_0010/ECU06_1710/ECU11_0010 of Encephalitozoon cuniculi (strain GB-M1) (Microsporidian parasite).